A 466-amino-acid polypeptide reads, in one-letter code: Chromogranin-A (466 aa).

The N-terminal stretch at 1 to 18 is a signal peptide; it reads MRSSAALALLLCAGQVFA. Cysteines 35 and 56 form a disulfide. The segment at 91–443 is disordered; it reads AQQQQQQQQQ…ANRRAEDQEL (353 aa). Residues 92 to 111 are compositionally biased toward low complexity; it reads QQQQQQQQQQQQQQQQQQQQ. A Phosphoserine modification is found at Ser114. The segment covering 131 to 155 has biased composition (basic and acidic residues); the sequence is KHGDAASEAPSKDTVEKREDSDKGQ. Positions 177-213 are enriched in polar residues; sequence ESSMMGNSQSPGEDTANNTQSPTSLPSQEHGIPQTTE. Position 215 is a phosphoserine (Ser215). The segment covering 233-247 has biased composition (acidic residues); that stretch reads KEEEEEEKEEEEEEK. Residues 248-259 show a composition bias toward basic and acidic residues; it reads EEKAIAREKAGP. Phosphoserine occurs at positions 288 and 312. Residues 305–314 are compositionally biased toward basic and acidic residues; sequence GKGELEHSQQ. Position 332 is a glycine amide (Gly332). Basic and acidic residues predominate over residues 351–378; sequence RLSREWEDKRWSRMDQLAKELTAEKRLE. Phosphoserine is present on residues Ser353 and Ser386. Met387 is modified (methionine sulfoxide). A compositionally biased stretch (basic and acidic residues) spans 412-440; that stretch reads SSREDSVEARGDFEEKKEEEGSANRRAED. Ser413, Ser417, and Ser433 each carry phosphoserine. Ser433 is a glycosylation site (O-linked (Xyl...) (chondroitin sulfate) serine). Gln441 carries the pyrrolidone carboxylic acid modification. Phosphoserine is present on Ser447.

This sequence belongs to the chromogranin/secretogranin protein family. As to quaternary structure, self-interacts; self-assembly is promoted in vitro by chondroitin sulfate attachment which occurs at mildly acidic pH conditions. Interacts with SCG3; this interaction is optimal in conditions mimicking the lumenal milieu of the trans-Golgi network, i.e. pH 5.5 and 10 mM Ca(+2). Interacts with ITPR1 in the secretory granules. In terms of processing, O-glycosylated; contains chondroitin sulfate (CS). CS attachment is pH-dependent, being observed at mildly acidic conditions of pH 5 but not at neutral pH, and promotes self-assembly in vitro. As to expression, expressed in the brain and adrenal and pituitary glands.

The protein localises to the cytoplasmic vesicle. The protein resides in the secretory vesicle. It localises to the neuronal dense core vesicle. It is found in the secreted. In terms of biological role, strongly inhibits glucose induced insulin release from the pancreas. Its function is as follows. Catestatin inhibits catecholamine release from chromaffin cells and noradrenergic neurons by acting as a non-competitive nicotinic cholinergic antagonist. Can induce mast cell migration, degranulation and production of cytokines and chemokines. Serpinin regulates granule biogenesis in endocrine cells by up-regulating the transcription of protease nexin 1 (SERPINE2) via a cAMP-PKA-SP1 pathway. This leads to inhibition of granule protein degradation in the Golgi complex which in turn promotes granule formation. Serpinin and pGlu-serpinin can enhance both myocardial contractility (inotropy) and relaxation (lusitropy) and this cardio-stimulation requires a beta 1-adrenergic receptor/adenylate cyclase/cAMP/PKA pathway. The polypeptide is Chromogranin-A (Chga) (Rattus norvegicus (Rat)).